The sequence spans 260 residues: Imidazole glycerol phosphate synthase subunit HisF (260 aa).

Catalysis depends on residues Asp11 and Asp130.

The protein belongs to the HisA/HisF family. As to quaternary structure, heterodimer of HisH and HisF.

It is found in the cytoplasm. The catalysed reaction is 5-[(5-phospho-1-deoxy-D-ribulos-1-ylimino)methylamino]-1-(5-phospho-beta-D-ribosyl)imidazole-4-carboxamide + L-glutamine = D-erythro-1-(imidazol-4-yl)glycerol 3-phosphate + 5-amino-1-(5-phospho-beta-D-ribosyl)imidazole-4-carboxamide + L-glutamate + H(+). Its pathway is amino-acid biosynthesis; L-histidine biosynthesis; L-histidine from 5-phospho-alpha-D-ribose 1-diphosphate: step 5/9. In terms of biological role, IGPS catalyzes the conversion of PRFAR and glutamine to IGP, AICAR and glutamate. The HisF subunit catalyzes the cyclization activity that produces IGP and AICAR from PRFAR using the ammonia provided by the HisH subunit. This is Imidazole glycerol phosphate synthase subunit HisF from Desulfatibacillum aliphaticivorans.